The primary structure comprises 156 residues: Putative pre-16S rRNA nuclease (156 aa).

It belongs to the YqgF nuclease family.

The protein resides in the cytoplasm. Functionally, could be a nuclease involved in processing of the 5'-end of pre-16S rRNA. This chain is Putative pre-16S rRNA nuclease, found in Bartonella tribocorum (strain CIP 105476 / IBS 506).